Here is an 862-residue protein sequence, read N- to C-terminus: Rab GTPase-binding effector protein 1 (862 aa).

At A2 the chain carries N-acetylalanine. Positions 11–345 (DVSLQQRVAE…KKTDTEEEVK (335 aa)) form a coiled coil. K282 carries the post-translational modification N6-acetyllysine. The interval 315–374 (ELKKKDQEEDEQQRVNKRKDNKKTDTEEEVKIPVVCALTQEESSTPLSNEEEHLDSTHGS) is disordered. Residues 336-345 (KKTDTEEEVK) show a composition bias toward basic and acidic residues. Residues S374, S377, and S407 each carry the phosphoserine modification. T408 bears the Phosphothreonine mark. Phosphoserine is present on S410. Positions 534–816 (DMCSNYEKQL…LQTELDVSEQ (283 aa)) form a coiled coil.

It belongs to the rabaptin family. Heterodimer with RABGEF1. The heterodimer binds RAB4A and RAB5A that have been activated by GTP-binding. Interacts with TSC2. Interacts with GGA1 (via GAE domain), GGA2 (via GAE domain) and GGA3 (via GAE domain). Interacts with AP1G1 (via GAE domain). Interacts with AP1G2 (via GAE domain). Interacts with ECPAS. Interacts with KCNH1. Interacts with PKD1 (via C-terminal domain) and GGA1; the interactions recruit PKD1:PKD2 complex to GGA1 and ARL3 at trans-Golgi network. Interacts with KCNH1. Proteolytic cleavage by caspases in apoptotic cells causes loss of endosome fusion activity.

The protein localises to the cytoplasm. Its subcellular location is the early endosome. It is found in the recycling endosome. It localises to the cytoplasmic vesicle. In terms of biological role, rab effector protein acting as linker between gamma-adaptin, RAB4A and RAB5A. Involved in endocytic membrane fusion and membrane trafficking of recycling endosomes. Involved in KCNH1 channels trafficking to and from the cell membrane. Stimulates RABGEF1 mediated nucleotide exchange on RAB5A. Mediates the traffic of PKD1:PKD2 complex from the endoplasmic reticulum through the Golgi to the cilium. The sequence is that of Rab GTPase-binding effector protein 1 (Rabep1) from Mus musculus (Mouse).